Here is a 1018-residue protein sequence, read N- to C-terminus: Contactin-1 (1018 aa).

Positions 1–20 (MKMWLLVSHLVIISITTCLA) are cleaved as a signal peptide. Ig-like C2-type domains are found at residues 41–131 (PIFE…ATLS), 137–223 (PFPP…KSVF), 241–326 (PADI…ARIY), 331–407 (PEWV…AELK), 413–500 (PTFE…GTLV), and 504–601 (PTRI…LVVR). 2 disulfides stabilise this stretch: cysteine 65–cysteine 114 and cysteine 158–cysteine 211. Residues asparagine 208 and asparagine 258 are each glycosylated (N-linked (GlcNAc...) asparagine). Cysteine 263 and cysteine 310 are joined by a disulfide. N-linked (GlcNAc...) asparagine glycosylation is present at asparagine 338. 2 disulfide bridges follow: cysteine 352-cysteine 391 and cysteine 436-cysteine 484. N-linked (GlcNAc...) asparagine glycosylation is found at asparagine 457 and asparagine 473. Residue asparagine 494 is glycosylated (N-linked (GlcNAc...) (complex) asparagine). Asparagine 521 carries an N-linked (GlcNAc...) asparagine glycan. Cysteine 526 and cysteine 583 are disulfide-bonded. An N-linked (GlcNAc...) asparagine glycan is attached at asparagine 591. 4 Fibronectin type-III domains span residues 606 to 704 (PPGG…TDGA), 709 to 806 (APSD…SAQD), 811 to 906 (APTE…APPS), and 907 to 1000 (QPPR…TLSP). The interval 693-717 (SIPSNRIKTDGAAPNVAPSDVGGGG) is disordered. A glycan (N-linked (GlcNAc...) asparagine) is linked at asparagine 933. Serine 993 carries the GPI-anchor amidated serine lipid modification. Residues 994-1018 (GAPTLSPSLLGLLLPAFGILVYLEF) constitute a propeptide, removed in mature form.

The protein belongs to the immunoglobulin superfamily. Contactin family. As to quaternary structure, monomer. Interacts with CNTNAP1 in cis form. Binds to the carbonic-anhydrase like domain of PTPRZ1. Interacts with NOTCH1 and TNR. Detected in a complex with NRCAM and PTPRB. Interacts with TASOR. As to expression, strongly expressed in brain and in neuroblastoma and retinoblastoma cell lines. Lower levels of expression in lung, pancreas, kidney and skeletal muscle.

Its subcellular location is the cell membrane. Its function is as follows. Contactins mediate cell surface interactions during nervous system development. Involved in the formation of paranodal axo-glial junctions in myelinated peripheral nerves and in the signaling between axons and myelinating glial cells via its association with CNTNAP1. Participates in oligodendrocytes generation by acting as a ligand of NOTCH1. Its association with NOTCH1 promotes NOTCH1 activation through the released notch intracellular domain (NICD) and subsequent translocation to the nucleus. Interaction with TNR induces a repulsion of neurons and an inhibition of neurite outgrowth. The sequence is that of Contactin-1 (CNTN1) from Homo sapiens (Human).